Reading from the N-terminus, the 292-residue chain is uncharacterized protein (292 aa).

Active-site charge relay system residues include Ser-44 and Tyr-106. The active-site Proton donor is the Tyr-132. Residue Lys-161 is the Schiff-base intermediate with substrate of the active site.

Belongs to the DapA family. In terms of assembly, homotetramer.

It is found in the cytoplasm. This is an uncharacterized protein from Thermoplasma acidophilum (strain ATCC 25905 / DSM 1728 / JCM 9062 / NBRC 15155 / AMRC-C165).